Consider the following 354-residue polypeptide: Arginase-2, mitochondrial (354 aa).

The transit peptide at 1-22 directs the protein to the mitochondrion; sequence MSYGSCVSRLLRTRVQSVLKKS. Positions 120, 143, 145, and 147 each coordinate Mn(2+). Substrate contacts are provided by residues 145–149, 156–158, and Asp-202; these read HADIN and SGN. Residues Asp-251 and Asp-253 each contribute to the Mn(2+) site. 2 residues coordinate substrate: Thr-265 and Glu-296. The interval 330-354 is disordered; sequence GHTVYEQLPPPSSPHESENAERVRI. Basic and acidic residues predominate over residues 344 to 354; sequence HESENAERVRI.

This sequence belongs to the arginase family. As to quaternary structure, homotrimer. It depends on Mn(2+) as a cofactor.

The protein localises to the mitochondrion. The catalysed reaction is L-arginine + H2O = urea + L-ornithine. It functions in the pathway nitrogen metabolism; urea cycle; L-ornithine and urea from L-arginine: step 1/1. Functionally, may play a role in the regulation of extra-urea cycle arginine metabolism and also in down-regulation of nitric oxide synthesis. Extrahepatic arginase functions to regulate L-arginine bioavailability to nitric oxid synthase (NOS). Arginine metabolism is a critical regulator of innate and adaptive immune responses. Seems to be involved in negative regulation of the survival capacity of activated T cells. May suppress inflammation-related signaling in asthmatic airway epithelium. May play a role in promoting prenatal immune suppression. Regulates RPS6KB1 signaling, which promotes endothelial cell senescence and inflammation and implicates NOS3/eNOS dysfunction. Can inhibit endothelial autophagy independently of its enzymatic activity implicating mTORC2 signaling. Involved in vascular smooth muscle cell senescence and apoptosis independently of its enzymatic activity. This Oryctolagus cuniculus (Rabbit) protein is Arginase-2, mitochondrial (ARG2).